Here is a 548-residue protein sequence, read N- to C-terminus: MNPSTTQARVVVDELIRGGVRDVVLCPGSRNAPLAFALQDADRSGRIRLHVRIDERTAGFLAIGLAVGAGAPACVAMTSGTAVANLGPAVVETNYARVPLIVLSANRPYELLGTGANQTMEQLGYFGTQVRATISLGLAEDAHERLDSLNASWRSATCRMLAAAMGSRTANAGPVHFDIPLREPLVPDPDPHGAVTPPGRPEGRPWTYTPPVTFDQPLEIDLSADTVVIAGHGAGVHPNLVQLPTIAEPTAPAAPSGGNPLHPLALPLLRPRQVIMLGRPTLHRPVSALLADPEVPVFALTTGPRWPDVSGNSQATGTRAIVTGTPNPSWLDRCAQMNRHAVAAVREQLAAHPLTTGLHVAAAVAGALRPGDQLVLGASNPVRDAALVGLDTAGLRVRSNRGVAGIDGTVSTAIGAALGYERDHHGRTVALIGDLTFVHDSSGLLIGPTEPTPRQLTIVVSNDNGGGIFELLEQGDPRFSDVSSRIFGTPHDVDVGALCRAYHVENRQIEVDQLPAALDEPGSGLRVLEVKADRSSLRQLHAAIKAAL.

This sequence belongs to the TPP enzyme family. MenD subfamily. In terms of assembly, homodimer. Requires Mg(2+) as cofactor. It depends on Mn(2+) as a cofactor. Thiamine diphosphate is required as a cofactor.

The catalysed reaction is isochorismate + 2-oxoglutarate + H(+) = 5-enolpyruvoyl-6-hydroxy-2-succinyl-cyclohex-3-ene-1-carboxylate + CO2. Its pathway is quinol/quinone metabolism; 1,4-dihydroxy-2-naphthoate biosynthesis; 1,4-dihydroxy-2-naphthoate from chorismate: step 2/7. It functions in the pathway quinol/quinone metabolism; menaquinone biosynthesis. Its function is as follows. Catalyzes the thiamine diphosphate-dependent decarboxylation of 2-oxoglutarate and the subsequent addition of the resulting succinic semialdehyde-thiamine pyrophosphate anion to isochorismate to yield 2-succinyl-5-enolpyruvyl-6-hydroxy-3-cyclohexene-1-carboxylate (SEPHCHC). This is 2-succinyl-5-enolpyruvyl-6-hydroxy-3-cyclohexene-1-carboxylate synthase from Mycobacterium ulcerans (strain Agy99).